The primary structure comprises 134 residues: Large ribosomal subunit protein uL16c (134 aa).

Residues 1-21 (MLSPKRTKYRKHHRGRMRGKA) are disordered.

It belongs to the universal ribosomal protein uL16 family. Part of the 50S ribosomal subunit.

The protein resides in the plastid. The protein localises to the chloroplast. The polypeptide is Large ribosomal subunit protein uL16c (Chlorella vulgaris (Green alga)).